A 342-amino-acid chain; its full sequence is Aquaporin-7 (342 aa).

The Cytoplasmic portion of the chain corresponds to 1 to 36; that stretch reads MVQASGHRRSTRGSKMVSWSVIAKIQEILQRKMVRE. Ser20 carries the phosphoserine modification. A helical transmembrane segment spans residues 37-54; sequence FLAEFMSTYVMMVFGLGS. Topologically, residues 55–67 are extracellular; that stretch reads VAHMVLNKKYGSY. The helical transmembrane segment at 68–85 threads the bilayer; that stretch reads LGVNLGFGFGVTMGVHVA. The Cytoplasmic portion of the chain corresponds to 86–89; the sequence is GRIS. An intramembrane region (discontinuously helical) is located at residues 90–103; that stretch reads GAHMNAAVTFANCA. The NPA 1 signature appears at 94–96; that stretch reads NAA. Over 104–111 the chain is Cytoplasmic; it reads LGRVPWRK. Residues 112-132 traverse the membrane as a helical segment; that stretch reads FPVYVLGQFLGSFLAAATIYS. Residues 133–170 are Extracellular-facing; the sequence is LFYTAILHFSGGQLMVTGPVATAGIFATYLPDHMTLWR. A helical membrane pass occupies residues 171-188; the sequence is GFLNEAWLTGMLQLCLFA. Residues 189–200 lie on the Cytoplasmic side of the membrane; the sequence is ITDQENNPALPG. The chain crosses the membrane as a helical span at residues 201–217; that stretch reads TEALVIGILVVIIGVSL. Over 218 to 221 the chain is Extracellular; the sequence is GMNT. The discontinuously helical intramembrane region spans 222-235; the sequence is GYAINPSRDLPPRI. The NPA 2 motif lies at 226–228; that stretch reads NPS. The Extracellular portion of the chain corresponds to 236 to 253; the sequence is FTFIAGWGKQVFSNGENW. Residues 254–275 traverse the membrane as a helical segment; that stretch reads WWVPVVAPLLGAYLGGIIYLVF. Residues 276-342 are Cytoplasmic-facing; sequence IGSTIPREPL…LHESMALEHF (67 aa).

This sequence belongs to the MIP/aquaporin (TC 1.A.8) family. In terms of assembly, homotetramer; each monomer provides an independent glycerol/water pore. Two homotetramers on opposing membranes can dimerize, forming a cell-cell junction. Interacts with PLIN1. Post-translationally, phosphorylation by PKA could prevent the interaction with PLIN1. As to expression, detected in the sperm head (at protein level). Detected in white adipose tissue.

Its subcellular location is the cell membrane. It localises to the cytoplasmic vesicle membrane. The protein resides in the lipid droplet. The enzyme catalyses glycerol(in) = glycerol(out). It carries out the reaction H2O(in) = H2O(out). It catalyses the reaction urea(in) = urea(out). Glycerol transport is regulated by pH, with the porin being permeable to glycerol at pH 7.4 but not at pH 5.5. Water permeability, however, is not influenced by pH. Inhibited by mercury ions. Aquaglyceroporins form homotetrameric transmembrane channels, with each monomer independently mediating glycerol and water transport across the plasma membrane along their osmotic gradient. Could also be permeable to urea. Mediates the efflux of glycerol, formed upon triglyceride hydrolysis, to avoid its accumulation in adipocytes and to make it available to other tissues. In the kidney, mediates the reabsorption of glycerol, preventing its loss in urine, again participating to energy homeostasis. In pancreatic beta cells, it also mediates the efflux of glycerol, regulating its intracellular levels. This chain is Aquaporin-7, found in Homo sapiens (Human).